Reading from the N-terminus, the 96-residue chain is Small ribosomal subunit protein bS6 (96 aa).

The protein belongs to the bacterial ribosomal protein bS6 family.

Functionally, binds together with bS18 to 16S ribosomal RNA. The sequence is that of Small ribosomal subunit protein bS6 from Streptococcus pneumoniae serotype 19F (strain G54).